Consider the following 301-residue polypeptide: MANLRDIRKKIGSVKNTQKITHAMKLVSTSKLRKAEEVARNSRAYALKLDAVFDDVLSKMKNQGIEDIQSKYFRELERLEIKKVDIIFITADKGLCGGFNTNTIKKVLACTNEYKEKDIKVRLRGIGKKGNEYFSFNGIEVLDKINNLSSMPNYERVQEFMKKVVEDYLSGKTDKVIIIHNGFKNMITQEIRVKTILPIGYKIIHQNPQPSETQETITSEPSGSEDEILDSLAEKYVEYSLYYALIDSLAAEHSARMQAMDTATNNAKDLVKTLTISYNKARQEAITTELVEINAGVEALK.

This sequence belongs to the ATPase gamma chain family. As to quaternary structure, F-type ATPases have 2 components, CF(1) - the catalytic core - and CF(0) - the membrane proton channel. CF(1) has five subunits: alpha(3), beta(3), gamma(1), delta(1), epsilon(1). CF(0) has three main subunits: a, b and c.

Its subcellular location is the cell inner membrane. Produces ATP from ADP in the presence of a proton gradient across the membrane. The gamma chain is believed to be important in regulating ATPase activity and the flow of protons through the CF(0) complex. The sequence is that of ATP synthase gamma chain from Helicobacter pylori (strain ATCC 700392 / 26695) (Campylobacter pylori).